Consider the following 646-residue polypeptide: Phosphomethylpyrimidine synthase (646 aa).

Substrate is bound by residues asparagine 235, methionine 264, tyrosine 293, histidine 329, 349-351, 390-393, and glutamate 429; these read SRG and DGLR. Histidine 433 is a Zn(2+) binding site. Residue tyrosine 456 coordinates substrate. Histidine 497 is a binding site for Zn(2+). Cysteine 577, cysteine 580, and cysteine 585 together coordinate [4Fe-4S] cluster.

It belongs to the ThiC family. Homodimer. It depends on [4Fe-4S] cluster as a cofactor.

It catalyses the reaction 5-amino-1-(5-phospho-beta-D-ribosyl)imidazole + S-adenosyl-L-methionine = 4-amino-2-methyl-5-(phosphooxymethyl)pyrimidine + CO + 5'-deoxyadenosine + formate + L-methionine + 3 H(+). It participates in cofactor biosynthesis; thiamine diphosphate biosynthesis. Its function is as follows. Catalyzes the synthesis of the hydroxymethylpyrimidine phosphate (HMP-P) moiety of thiamine from aminoimidazole ribotide (AIR) in a radical S-adenosyl-L-methionine (SAM)-dependent reaction. The chain is Phosphomethylpyrimidine synthase from Vibrio campbellii (strain ATCC BAA-1116).